A 447-amino-acid polypeptide reads, in one-letter code: Ribosomal protein uS12 methylthiotransferase RimO (447 aa).

The 111-residue stretch at 4-114 (PKVGFVSLGC…VMEAVHEYVP (111 aa)) folds into the MTTase N-terminal domain. Positions 13, 49, 78, 147, 151, and 154 each coordinate [4Fe-4S] cluster. Residues 133–370 (LTPKHYAYLK…MQVQQQISAA (238 aa)) form the Radical SAM core domain. The TRAM domain occupies 373 to 443 (QKRIGQTMTV…EYDLFAKLIK (71 aa)).

The protein belongs to the methylthiotransferase family. RimO subfamily. The cofactor is [4Fe-4S] cluster.

It is found in the cytoplasm. It carries out the reaction L-aspartate(89)-[ribosomal protein uS12]-hydrogen + (sulfur carrier)-SH + AH2 + 2 S-adenosyl-L-methionine = 3-methylsulfanyl-L-aspartate(89)-[ribosomal protein uS12]-hydrogen + (sulfur carrier)-H + 5'-deoxyadenosine + L-methionine + A + S-adenosyl-L-homocysteine + 2 H(+). Its function is as follows. Catalyzes the methylthiolation of an aspartic acid residue of ribosomal protein uS12. This Acinetobacter baumannii (strain AB0057) protein is Ribosomal protein uS12 methylthiotransferase RimO.